We begin with the raw amino-acid sequence, 410 residues long: Dipeptidase 1 (410 aa).

The signal sequence occupies residues Met1–Ala16. Zn(2+) contacts are provided by His36 and Asp38. Residue Asn57 is glycosylated (N-linked (GlcNAc...) asparagine). Cys87 and Cys170 are oxidised to a cystine. Glu141 lines the Zn(2+) pocket. Position 168 (His168) interacts with substrate. Positions 214 and 235 each coordinate Zn(2+). An intrachain disulfide couples Cys242 to Cys274. Residues Arg246 and Asp304 each coordinate substrate. Ser384 carries the GPI-anchor amidated serine lipid modification. A propeptide spans Glu385–Leu410 (removed in mature form).

Belongs to the metallo-dependent hydrolases superfamily. Peptidase M19 family. As to quaternary structure, homodimer; disulfide-linked. The cofactor is Zn(2+).

It localises to the apical cell membrane. The protein localises to the cell projection. It is found in the microvillus membrane. The enzyme catalyses an L-aminoacyl-L-amino acid + H2O = 2 an L-alpha-amino acid. The catalysed reaction is leukotriene D4 + H2O = leukotriene E4 + glycine. It carries out the reaction L-cystine-bis-glycine + 2 H2O = L-cystine + 2 glycine. It catalyses the reaction a beta-lactam + H2O = a substituted beta-amino acid. The enzyme catalyses glycyldehydrophenylalanine + H2O = 2,3-didehydrophenylalanine + glycine. Its activity is regulated as follows. Inhibited by L-penicillamine. Beta-lactamase activity is inhibited by cilastatin. Hydrolyzes a wide range of dipeptides including the conversion of leukotriene D4 to leukotriene E4. Hydrolyzes cystinyl-bis-glycine (cys-bis-gly) formed during glutathione degradation. Also possesses beta lactamase activity and hydrolytically inactivates beta-lactam antibiotics. In terms of biological role, independently of its dipeptidase activity, acts as an adhesion receptor for neutrophil recruitment from bloodstream into inflamed lungs and liver. This Oryctolagus cuniculus (Rabbit) protein is Dipeptidase 1 (DPEP1).